Reading from the N-terminus, the 162-residue chain is CASP-like protein 1C2 (162 aa).

Topologically, residues 1–6 are cytoplasmic; sequence MMKPKR. A helical transmembrane segment spans residues 7-27; it reads LLSLLLRLIAVGATLAAVIIM. The Extracellular segment spans residues 28 to 49; that stretch reads ATSHEKGTFFAVSYEAKYTDTP. Residues 50 to 70 traverse the membrane as a helical segment; the sequence is AFKYFVIANAIVTVYGFLVLF. The Cytoplasmic segment spans residues 71–79; the sequence is HPPGSPLWR. Residues 80–100 form a helical membrane-spanning segment; the sequence is LVLALDLVFTMLLISSISAAL. At 101–130 the chain is on the extracellular side; the sequence is AVAQVGKNGNSRAGWLPVCGQVTKYCNQVT. A helical transmembrane segment spans residues 131–151; the sequence is GALVAGLIALITYIILLLHSI. Residues 152–162 lie on the Cytoplasmic side of the membrane; sequence YTFLNPLLEKA.

The protein belongs to the Casparian strip membrane proteins (CASP) family. In terms of assembly, homodimer and heterodimers.

It localises to the cell membrane. This chain is CASP-like protein 1C2, found in Populus trichocarpa (Western balsam poplar).